The chain runs to 376 residues: NAD(P)H-quinone oxidoreductase subunit 1, chloroplastic (376 aa).

9 consecutive transmembrane segments (helical) span residues L27 to V47, P65 to I85, W97 to V117, L130 to G150, A166 to L186, G251 to F271, A272 to I292, L310 to F330, and F353 to F373.

Belongs to the complex I subunit 1 family. In terms of assembly, NDH is composed of at least 16 different subunits, 5 of which are encoded in the nucleus.

The protein resides in the plastid. It localises to the chloroplast thylakoid membrane. It carries out the reaction a plastoquinone + NADH + (n+1) H(+)(in) = a plastoquinol + NAD(+) + n H(+)(out). The catalysed reaction is a plastoquinone + NADPH + (n+1) H(+)(in) = a plastoquinol + NADP(+) + n H(+)(out). In terms of biological role, NDH shuttles electrons from NAD(P)H:plastoquinone, via FMN and iron-sulfur (Fe-S) centers, to quinones in the photosynthetic chain and possibly in a chloroplast respiratory chain. The immediate electron acceptor for the enzyme in this species is believed to be plastoquinone. Couples the redox reaction to proton translocation, and thus conserves the redox energy in a proton gradient. This Chara vulgaris (Common stonewort) protein is NAD(P)H-quinone oxidoreductase subunit 1, chloroplastic.